A 321-amino-acid chain; its full sequence is Malate dehydrogenase (321 aa).

Residues 13–18 (GAGNIG) and Asp38 each bind NAD(+). Positions 87 and 93 each coordinate substrate. Residues Asn100 and 123-125 (VTN) contribute to the NAD(+) site. Substrate-binding residues include Asn125 and Arg156. The Proton acceptor role is filled by His180.

The protein belongs to the LDH/MDH superfamily. MDH type 3 family.

The catalysed reaction is (S)-malate + NAD(+) = oxaloacetate + NADH + H(+). Functionally, catalyzes the reversible oxidation of malate to oxaloacetate. This is Malate dehydrogenase from Anaplasma phagocytophilum (strain HZ).